Here is an 87-residue protein sequence, read N- to C-terminus: Sec-independent protein translocase protein TatA (87 aa).

Residues 1-21 (MGSFSIWHWLIVLLIVVMVFG) form a helical membrane-spanning segment. Positions 40–87 (KDGMKDGSTPEGTPASTTAATPPAGQVTNQQAHAADPGTIDVEAKHKG) are disordered. A compositionally biased stretch (low complexity) spans 46 to 64 (GSTPEGTPASTTAATPPAG).

The protein belongs to the TatA/E family. As to quaternary structure, the Tat system comprises two distinct complexes: a TatABC complex, containing multiple copies of TatA, TatB and TatC subunits, and a separate TatA complex, containing only TatA subunits. Substrates initially bind to the TatABC complex, which probably triggers association of the separate TatA complex to form the active translocon.

The protein resides in the cell inner membrane. Part of the twin-arginine translocation (Tat) system that transports large folded proteins containing a characteristic twin-arginine motif in their signal peptide across membranes. TatA could form the protein-conducting channel of the Tat system. This Paracidovorax citrulli (strain AAC00-1) (Acidovorax citrulli) protein is Sec-independent protein translocase protein TatA.